The sequence spans 263 residues: Thiazole synthase (263 aa).

K100 serves as the catalytic Schiff-base intermediate with DXP. Residues G161, 188–189, and 210–211 contribute to the 1-deoxy-D-xylulose 5-phosphate site; these read AG and NS.

This sequence belongs to the ThiG family. Homotetramer. Forms heterodimers with either ThiH or ThiS.

It is found in the cytoplasm. It carries out the reaction [ThiS sulfur-carrier protein]-C-terminal-Gly-aminoethanethioate + 2-iminoacetate + 1-deoxy-D-xylulose 5-phosphate = [ThiS sulfur-carrier protein]-C-terminal Gly-Gly + 2-[(2R,5Z)-2-carboxy-4-methylthiazol-5(2H)-ylidene]ethyl phosphate + 2 H2O + H(+). Its pathway is cofactor biosynthesis; thiamine diphosphate biosynthesis. Catalyzes the rearrangement of 1-deoxy-D-xylulose 5-phosphate (DXP) to produce the thiazole phosphate moiety of thiamine. Sulfur is provided by the thiocarboxylate moiety of the carrier protein ThiS. In vitro, sulfur can be provided by H(2)S. This is Thiazole synthase from Pseudoalteromonas translucida (strain TAC 125).